Reading from the N-terminus, the 363-residue chain is Cyclin-D1-1 (363 aa).

Residues 39–77 (ELEREGEPAQGSSPSSSLSCAAAAAAAADDDDEDEDEHG) are disordered. Positions 50 to 65 (SSPSSSLSCAAAAAAA) are enriched in low complexity. Positions 66-75 (ADDDDEDEDE) are enriched in acidic residues.

It belongs to the cyclin family. Cyclin D subfamily.

In Oryza sativa subsp. japonica (Rice), this protein is Cyclin-D1-1 (CYCD1-1).